A 353-amino-acid chain; its full sequence is Keratocan (353 aa).

The N-terminal stretch at Met1–Thr21 is a signal peptide. The LRRNT domain maps to Glu34 to Ala72. 2 cysteine pairs are disulfide-bonded: Cys43/Cys49 and Cys47/Cys59. 8 LRR repeats span residues Arg73 to Asn94, His97 to Leu118, Arg123 to Val143, Gly144 to Asn165, Asn168 to Thr188, Ser194 to Ala214, Asn215 to Ala236, and Lys239 to Gly259. Residue Asn94 is glycosylated (N-linked (GlcNAc...) (keratan sulfate) asparagine). Residue Asn168 is glycosylated (N-linked (GlcNAc...) asparagine). N-linked (GlcNAc...) (keratan sulfate) asparagine glycosylation is present at Asn223. N-linked (GlcNAc...) (keratan sulfate) asparagine glycosylation is present at Asn261. LRR repeat units follow at residues Ser264–Ala283 and His284–Pro305. N-linked (GlcNAc...) asparagine glycosylation occurs at Asn299. A disulfide bridge links Cys304 with Cys344.

The protein belongs to the small leucine-rich proteoglycan (SLRP) family. SLRP class II subfamily. In terms of tissue distribution, cornea.

It is found in the secreted. It localises to the extracellular space. Its subcellular location is the extracellular matrix. In terms of biological role, plays an important role in generating and maintaining a transparent matrix within the corneal stroma. The sequence is that of Keratocan (KERA) from Coturnix japonica (Japanese quail).